Consider the following 574-residue polypeptide: Proline--tRNA ligase (574 aa).

Belongs to the class-II aminoacyl-tRNA synthetase family. ProS type 1 subfamily. In terms of assembly, homodimer.

Its subcellular location is the cytoplasm. It catalyses the reaction tRNA(Pro) + L-proline + ATP = L-prolyl-tRNA(Pro) + AMP + diphosphate. Functionally, catalyzes the attachment of proline to tRNA(Pro) in a two-step reaction: proline is first activated by ATP to form Pro-AMP and then transferred to the acceptor end of tRNA(Pro). As ProRS can inadvertently accommodate and process non-cognate amino acids such as alanine and cysteine, to avoid such errors it has two additional distinct editing activities against alanine. One activity is designated as 'pretransfer' editing and involves the tRNA(Pro)-independent hydrolysis of activated Ala-AMP. The other activity is designated 'posttransfer' editing and involves deacylation of mischarged Ala-tRNA(Pro). The misacylated Cys-tRNA(Pro) is not edited by ProRS. The protein is Proline--tRNA ligase of Thioalkalivibrio sulfidiphilus (strain HL-EbGR7).